The sequence spans 597 residues: CTP synthase (597 aa).

The tract at residues 1–272 (MARPKNVKYV…DMRVLKKLGL (272 aa)) is amidoligase domain. Ser-18 contacts CTP. A UTP-binding site is contributed by Ser-18. 19-24 (SLGKGI) serves as a coordination point for ATP. Residue Tyr-59 participates in L-glutamine binding. Asp-76 contacts ATP. Positions 76 and 146 each coordinate Mg(2+). Residues 153-155 (DIE), 193-198 (KTKPTQ), and Lys-229 each bind CTP. UTP contacts are provided by residues 193–198 (KTKPTQ) and Lys-229. The Glutamine amidotransferase type-1 domain occupies 299–543 (NVAICGKYTE…VGAAKAYADG (245 aa)). Gly-363 contacts L-glutamine. Residue Cys-390 is the Nucleophile; for glutamine hydrolysis of the active site. Residues 391–394 (LGMQ), Glu-414, and Arg-471 each bind L-glutamine. Active-site residues include His-516 and Glu-518.

The protein belongs to the CTP synthase family. In terms of assembly, homotetramer.

It carries out the reaction UTP + L-glutamine + ATP + H2O = CTP + L-glutamate + ADP + phosphate + 2 H(+). It catalyses the reaction L-glutamine + H2O = L-glutamate + NH4(+). The catalysed reaction is UTP + NH4(+) + ATP = CTP + ADP + phosphate + 2 H(+). It functions in the pathway pyrimidine metabolism; CTP biosynthesis via de novo pathway; CTP from UDP: step 2/2. Its activity is regulated as follows. Allosterically activated by GTP, when glutamine is the substrate; GTP has no effect on the reaction when ammonia is the substrate. The allosteric effector GTP functions by stabilizing the protein conformation that binds the tetrahedral intermediate(s) formed during glutamine hydrolysis. Inhibited by the product CTP, via allosteric rather than competitive inhibition. Functionally, catalyzes the ATP-dependent amination of UTP to CTP with either L-glutamine or ammonia as the source of nitrogen. Regulates intracellular CTP levels through interactions with the four ribonucleotide triphosphates. The chain is CTP synthase from Chlorobium luteolum (strain DSM 273 / BCRC 81028 / 2530) (Pelodictyon luteolum).